Consider the following 253-residue polypeptide: UPF0246 protein LBA1843 (253 aa).

It belongs to the UPF0246 family.

This chain is UPF0246 protein LBA1843, found in Lactobacillus acidophilus (strain ATCC 700396 / NCK56 / N2 / NCFM).